Consider the following 628-residue polypeptide: Putative ankyrin repeat protein L769 (628 aa).

ANK repeat units lie at residues Asn-217–Phe-246, Asp-333–Arg-362, Thr-421–Leu-451, and Asn-512–Tyr-542.

The sequence is that of Putative ankyrin repeat protein L769 from Acanthamoeba polyphaga mimivirus (APMV).